The primary structure comprises 252 residues: Probable phosphatase Shewana3_2794 (252 aa).

Zn(2+) contacts are provided by His8, His10, His16, His41, Glu74, His102, His132, Asp193, and His195.

Belongs to the PHP family. Requires Zn(2+) as cofactor.

This chain is Probable phosphatase Shewana3_2794, found in Shewanella sp. (strain ANA-3).